Consider the following 358-residue polypeptide: Cyclin-dependent kinase 11 (358 aa).

The region spanning 52–336 (FKKLYTINEG…ASDALKHPYF (285 aa)) is the Protein kinase domain. ATP is bound by residues 58-66 (INEGAFGVV) and K81. D176 acts as the Proton acceptor in catalysis.

The protein belongs to the protein kinase superfamily. CMGC Ser/Thr protein kinase family. CDC2/CDKX subfamily.

It catalyses the reaction L-seryl-[protein] + ATP = O-phospho-L-seryl-[protein] + ADP + H(+). The catalysed reaction is L-threonyl-[protein] + ATP = O-phospho-L-threonyl-[protein] + ADP + H(+). This is Cyclin-dependent kinase 11 (cdk11) from Dictyostelium discoideum (Social amoeba).